A 1133-amino-acid polypeptide reads, in one-letter code: SH3 and PX domain-containing protein 2A (1133 aa).

The 125-residue stretch at 4–128 (YCVQDATVVD…RFFEARPEDV (125 aa)) folds into the PX domain. The region spanning 166 to 225 (MILEQYVVVSNYKKQENSELSLQAGEVVDVIEKNESGWWFVSTSEEQGWVPATYLEAQNG) is the SH3 1 domain. Position 256 is a phosphothreonine (Thr-256). The 60-residue stretch at 266–325 (SREEKYVTVQPYTSQSKDEIGFEKGVTVEVIRKNLEGWWYIRYLGKEGWAPASYLKKAKD) folds into the SH3 2 domain. Phosphoserine occurs at positions 406 and 421. Disordered regions lie at residues 415-446 (QRAQISSPNLRTRPPPRRESSLGFQLPKPPEP), 505-840 (RKKP…EWEG), 899-924 (NEQPDPSGKELDTVPAKGRQNEGKSD), and 941-964 (QSKKATPPIPSKPPGGFGKTSGTP). Positions 448 to 507 (SVEVEYYTIAEFQSCISDGISFRGGQKAEVIDKNSGGWWYVQIGEKEGWAPASYIDKRKK) constitute an SH3 3 domain. Residues 546–555 (DSPRKLKYEE) are compositionally biased toward basic and acidic residues. 2 positions are modified to phosphoserine: Ser-547 and Ser-567. The span at 567 to 576 (SEPELSEEPV) shows a compositional bias: acidic residues. Residues 577 to 586 (EDRASGERRP) show a composition bias toward basic and acidic residues. Ser-593 is subject to Phosphoserine. Residues 608-620 (SSEDVALEEETIY) show a composition bias toward acidic residues. Composition is skewed to low complexity over residues 634–652 (SARGSSGDSDSPGSSSLSL), 658–670 (PKSGSPKSSSLLK), and 686–715 (SSASFSSSITINTTCCSSSSSSSSSLSKTS). Ser-644 is modified (phosphoserine). The residue at position 731 (Thr-731) is a Phosphothreonine. 3 positions are modified to phosphoserine: Ser-767, Ser-769, and Ser-819. Position 829 is a phosphothreonine (Thr-829). The 60-residue stretch at 840-899 (GPATSYMTCSAYQKVQDSEISFPAGVEVQVLEKQESGWWYVRFGELEGWAPSHYLVLDEN) folds into the SH3 4 domain. Positions 917–946 (RQNEGKSDSLEKIERRVQALNTVNQSKKAT) form a coiled coil. Phosphoserine is present on residues Ser-1002, Ser-1016, Ser-1017, and Ser-1038. The tract at residues 1029–1059 (KGRLAERAASQGSDSPLLPAQRNSIPVSPVR) is disordered. Positions 1072 to 1133 (NLKDVYVSIA…VPSNYLEKKN (62 aa)) constitute an SH3 5 domain.

This sequence belongs to the SH3PXD2 family. As to quaternary structure, interacts (via N-terminus) with CYBA. Interacts with ADAM12, ADAM15 and ADAM19. Interacts with NOXO1. Interacts (via SH3 domains) with NOXA1. Interacts with FASLG. Interacts (via PX domain) with RAB40B (GTP-bound); interaction promotes invadopodia-mediated extracellular matrix degradation. In terms of processing, tyrosine phosphorylated by SRC. Phosphorylation plays a regulatory role in the protein localization. The intramolecular interaction of the PX domain with the third SH3 domain maintains the protein in the cytoplasm and phosphorylation disrupts this interaction, resulting in the redistribution of the protein from cytoplasm to the perimembrane region. Phosphorylated on serine upon DNA damage, probably by ATM or ATR. Found in several cancer cell lines, particularly invasive breast carcinomas and melanomas.

It localises to the cytoplasm. Its subcellular location is the cell projection. It is found in the podosome. In terms of biological role, adapter protein involved in invadopodia and podosome formation, extracellular matrix degradation and invasiveness of some cancer cells. Binds matrix metalloproteinases (ADAMs), NADPH oxidases (NOXs) and phosphoinositides. Acts as an organizer protein that allows NOX1- or NOX3-dependent reactive oxygen species (ROS) generation and ROS localization. In association with ADAM12, mediates the neurotoxic effect of amyloid-beta peptide. The polypeptide is SH3 and PX domain-containing protein 2A (Homo sapiens (Human)).